A 207-amino-acid chain; its full sequence is Protein 6b (207 aa).

Residues glycine 160 to glutamate 183 form a disordered region. The span at glutamate 164 to glutamate 178 shows a compositional bias: acidic residues.

Involved in tumor formation and increases auxin and cytokinin effects in host plants. The polypeptide is Protein 6b (6b) (Agrobacterium tumefaciens (strain Ach5)).